Reading from the N-terminus, the 710-residue chain is DNA ligase (710 aa).

The tract at residues 1-36 is disordered; sequence MTSSSPRHADPDENPYVEAPPTDFEPVGALSEDEAT. Residues 63–67, 111–112, and Glu-147 contribute to the NAD(+) site; these read DETYD and SI. Lys-149 functions as the N6-AMP-lysine intermediate in the catalytic mechanism. NAD(+)-binding residues include Arg-170, Glu-206, and Lys-353. Zn(2+)-binding residues include Cys-444, Cys-447, Cys-460, and Cys-466. One can recognise a BRCT domain in the interval 623–710; that stretch reads ETGDALDGLT…ERGVAWPPEE (88 aa). Positions 657-689 are disordered; sequence ATSSVSGNTDYLVAGESPGRSKRDDADAEGVPV.

This sequence belongs to the NAD-dependent DNA ligase family. LigA subfamily. It depends on Mg(2+) as a cofactor. The cofactor is Mn(2+).

It catalyses the reaction NAD(+) + (deoxyribonucleotide)n-3'-hydroxyl + 5'-phospho-(deoxyribonucleotide)m = (deoxyribonucleotide)n+m + AMP + beta-nicotinamide D-nucleotide.. Its function is as follows. DNA ligase that catalyzes the formation of phosphodiester linkages between 5'-phosphoryl and 3'-hydroxyl groups in double-stranded DNA using NAD as a coenzyme and as the energy source for the reaction. It is essential for DNA replication and repair of damaged DNA. The sequence is that of DNA ligase from Halorubrum lacusprofundi (strain ATCC 49239 / DSM 5036 / JCM 8891 / ACAM 34).